Reading from the N-terminus, the 110-residue chain is Putative zinc finger protein ORF110 (110 aa).

A C2H2-type zinc finger spans residues 3-26; sequence YVCTACKLKFHTFEEFKIHVHLFH.

This Acidianus filamentous virus 1 (isolate United States/Yellowstone) (AFV-1) protein is Putative zinc finger protein ORF110.